The sequence spans 957 residues: Glycine dehydrogenase (decarboxylating) (957 aa).

At K708 the chain carries N6-(pyridoxal phosphate)lysine.

It belongs to the GcvP family. As to quaternary structure, the glycine cleavage system is composed of four proteins: P, T, L and H. The cofactor is pyridoxal 5'-phosphate.

It carries out the reaction N(6)-[(R)-lipoyl]-L-lysyl-[glycine-cleavage complex H protein] + glycine + H(+) = N(6)-[(R)-S(8)-aminomethyldihydrolipoyl]-L-lysyl-[glycine-cleavage complex H protein] + CO2. Functionally, the glycine cleavage system catalyzes the degradation of glycine. The P protein binds the alpha-amino group of glycine through its pyridoxal phosphate cofactor; CO(2) is released and the remaining methylamine moiety is then transferred to the lipoamide cofactor of the H protein. This chain is Glycine dehydrogenase (decarboxylating), found in Escherichia coli (strain ATCC 8739 / DSM 1576 / NBRC 3972 / NCIMB 8545 / WDCM 00012 / Crooks).